Consider the following 179-residue polypeptide: GTP-dependent dephospho-CoA kinase (179 aa).

Residues aspartate 55, valine 57, aspartate 74, lysine 76, and glutamate 128 each contribute to the GTP site.

The protein belongs to the GTP-dependent DPCK family.

It catalyses the reaction 3'-dephospho-CoA + GTP = GDP + CoA + H(+). It functions in the pathway cofactor biosynthesis; coenzyme A biosynthesis. Its function is as follows. Catalyzes the GTP-dependent phosphorylation of the 3'-hydroxyl group of dephosphocoenzyme A to form coenzyme A (CoA). This chain is GTP-dependent dephospho-CoA kinase, found in Saccharolobus solfataricus (strain ATCC 35092 / DSM 1617 / JCM 11322 / P2) (Sulfolobus solfataricus).